The sequence spans 453 residues: MALVRALVCCLLTAWHCRSGLGLPVAPAGGRNPPPAIGQFWHVTDLHLDPTYHITDDHTKVCASSKGANASNPGPFGDVLCDSPYQLILSAFDFIKNSGQEASFMIWTGDSPPHVPVPELSTDTVINVITNMTTTIQSLFPNLQVFPALGNHDYWPQDQLPVVTSKVYNAVANLWKPWLDEEAISTLRKGGFYSQKVTTNPNLRIISLNTNLYYGPNIMTLNKTDPANQFEWLESTLNNSQQNKEKVYIIAHVPVGYLPSSQNITAMREYYNEKLIDIFQKYSDVIAGQFYGHTHRDSIMVLSDKKGSPVNSLFVAPAVTPVKSVLEKQTNNPGIRLFQYDPRDYKLLDMLQYYLNLTEANLKGESIWKLEYILTQTYDIEDLQPESLYGLAKQFTILDSKQFIKYYNYFFVSYDSSVTCDKTCKAFQICAIMNLDNISYADCLKQLYIKHNY.

A signal peptide spans 1–22 (MALVRALVCCLLTAWHCRSGLG). Zn(2+)-binding residues include D45 and H47. An intrachain disulfide couples C62 to C81. N-linked (GlcNAc...) asparagine glycosylation is present at N69. D110 lines the Zn(2+) pocket. H114 provides a ligand contact to ATP. N-linked (GlcNAc...) asparagine glycosylation is present at N131. N151 lines the Zn(2+) pocket. 2 residues coordinate ATP: N151 and H152. N-linked (GlcNAc...) asparagine glycans are attached at residues N222 and N238. Residue H252 participates in Zn(2+) binding. N-linked (GlcNAc...) asparagine glycosylation occurs at N263. Zn(2+) is bound by residues H293 and H295. N-linked (GlcNAc...) asparagine glycosylation occurs at N356. 2 disulfides stabilise this stretch: C420/C424 and C430/C443. N437 carries N-linked (GlcNAc...) asparagine glycosylation.

This sequence belongs to the acid sphingomyelinase family. As to quaternary structure, monomer. Homodimer; homodimerizes following 2',3'-cGAMP-binding. Requires Zn(2+) as cofactor. In terms of processing, N-glycosylation is required for protein maturation, secretion and phosphodiesterase activity. In terms of tissue distribution, detected in blood serum. Detected in macrophages (at protein level).

It localises to the secreted. It catalyses the reaction 2',3'-cGAMP + H2O = 5'-pGpA(2'-5') + H(+). The enzyme catalyses 5'-pGpA(2'-5') + H2O = 5'-GpA(2'-5') + phosphate. It carries out the reaction a ribonucleoside 5'-triphosphate + H2O = a ribonucleoside 5'-diphosphate + phosphate + H(+). The catalysed reaction is ATP + H2O = ADP + phosphate + H(+). With respect to regulation, requires micromolar levels of Zn(2+) for activity. Inhibited by millimolar levels of Zn(2+). In terms of biological role, cyclic-nucleotide phosphodiesterase that acts as a negative regulator of innate immunity by mediating degradation of 2',3'-cGAMP, thereby inhibiting the cGAS-STING signaling. Specifically linearizes 2',3'-cGAMP into 2'5'-bond pGpA and further hydrolyzes pGpA to produce GpA. Also has in vitro nucleotide phosphodiesterase activity with nucleoside triphosphates, such as ATP. Has in vitro activity with p-nitrophenyl-TMP. Has lower activity with nucleoside diphosphates, and no activity with nucleoside monophosphates. Has in vitro activity with CDP-choline, giving rise to CMP and phosphocholine. Has in vitro activity with CDP-ethanolamine. Does not have sphingomyelin phosphodiesterase activity. The sequence is that of Cyclic GMP-AMP phosphodiesterase SMPDL3A from Homo sapiens (Human).